The sequence spans 219 residues: Asperlin biosynthesis cluster protein I (219 aa).

The interval 97-124 (TGSSDNSPTATGIGAAGLTGDRPSSSGA) is disordered. The span at 105-116 (TATGIGAAGLTG) shows a compositional bias: low complexity.

Its pathway is polyketide biosynthesis. Its function is as follows. Part of the gene cluster that mediates the biosynthesis of asperlin, a polyketide showing anti-inflammatory, antitumor and antibiotic activities. The first step of the asperlin biosynthesis is the production of the intermediate 2,4,6-octatrienoic acid by the highly redusing polyketide synthase alnA with cleavage of the PKS product by the esterase alnB. 2,4,6-octatrienoic acid is further converted to asperlin via several steps involving the remaining enzymes from the cluster. This is Asperlin biosynthesis cluster protein I from Emericella nidulans (strain FGSC A4 / ATCC 38163 / CBS 112.46 / NRRL 194 / M139) (Aspergillus nidulans).